The sequence spans 266 residues: MATVPEPTNEVMAYYSDENDLLFEADGPKQMKCCVQPLDLNSMGDGSIHLQISHQLYNKSLRRVVSVIVAVEKLQKIPCSQTFQDDGLRSIFSLIFEEEPVIFETYDDDLLCDAGVQSLTCKLQDRDQKSLVLASPCVLKALHLLARDVNREVVFCMSFVQGDESNDKIPVALGLKEKNLYLSCVMKGDRPTLQLEEVDPKTYPKWKMEKRFVFNKTEIKNSVEFESALYPNWYISTSQAEEKPIFLGRSKGGHDITDFTMEIISP.

Positions 1 to 113 (MATVPEPTNE…ETYDDDLLCD (113 aa)) are excised as a propeptide.

This sequence belongs to the IL-1 family. In terms of assembly, monomer. In its precursor form, weakly interacts with full-length MEFV; the mature cytokine does not interact at all. Interacts with integrins ITGAV:ITGBV and ITGA5:ITGB1; integrin-binding is required for IL1B signaling. Interacts with cargo receptor TMED10; the interaction is direct and is required for the secretion of IL1B mature form. Interacts with HSP90AB1; the interaction facilitates cargo translocation into the ERGIC. Interacts with HSP90B1; the interaction facilitates cargo translocation into the ERGIC.

Its subcellular location is the cytoplasm. It localises to the cytosol. It is found in the secreted. The protein resides in the lysosome. The protein localises to the extracellular exosome. Functionally, potent pro-inflammatory cytokine. Initially discovered as the major endogenous pyrogen, induces prostaglandin synthesis, neutrophil influx and activation, T-cell activation and cytokine production, B-cell activation and antibody production, and fibroblast proliferation and collagen production. Promotes Th17 differentiation of T-cells. Synergizes with IL12/interleukin-12 to induce IFNG synthesis from T-helper 1 (Th1) cells. Plays a role in angiogenesis by inducing VEGF production synergistically with TNF and IL6. Involved in transduction of inflammation downstream of pyroptosis: its mature form is specifically released in the extracellular milieu by passing through the gasdermin-D (GSDMD) pore. This is Interleukin-1 beta (IL1B) from Delphinapterus leucas (Beluga whale).